Reading from the N-terminus, the 893-residue chain is Sperm-associated antigen 1 (893 aa).

The span at 112-126 (ENTRHFHDPEKHPGV) shows a compositional bias: basic and acidic residues. Positions 112–155 (ENTRHFHDPEKHPGVEDPLPPVRGSNSCPRGGKETSSKSKTAKK) are disordered. TPR repeat units follow at residues 213–246 (ANREKGKGNEAFYSGDYEEAVMYYTRSLSALPTA), 247–279 (TAYNNRAQAEIKLQRWSSALEDCEKALELEPGN), and 280–313 (IKALLRRATTYKHQNKFLEAVDDLRKVLQAEPDN). 3 disordered regions span residues 324 to 344 (ERELKNSEPASELQTKGKRMV), 349 to 368 (ENSGDEGGKGDEDDHEDDGV), and 373 to 437 (MGNI…SRGN). Ser-351 is subject to Phosphoserine. The segment covering 403 to 415 (QEGQPETGTASTS) has biased composition (polar residues). Basic and acidic residues predominate over residues 416-437 (DNHDLEERRAADSPGDLKSRGN). 5 TPR repeats span residues 429-463 (PGDLKSRGNELFRGGQFAEAAVQYSGAIAQLEPTG), 471-504 (SILYSNRAACYLKEGNCRGCIQDCDRALELQPFA), 506-538 (KPLLRRAMAYETLEQYRSAYVDYITVLKIDCRI), 605-638 (FQALKEEGNQLVKDKNYKDAISKYNECLKINSKA), and 639-672 (CAIYTNRALCYLKLGQFEEAKLDCDKALQIDSKN). 630-637 (ECLKINSK) contributes to the GTP binding site. Position 703 is a phosphoserine (Ser-703). The tract at residues 704-756 (PDSSEAARHLDTKNDTAPPSRERERRRIEIQEVDDSSDEEPERPAEASAVEEG) is disordered. Basic and acidic residues predominate over residues 708 to 733 (EAARHLDTKNDTAPPSRERERRRIEI). Positions 734–744 (QEVDDSSDEEP) are enriched in acidic residues. Phosphoserine occurs at positions 739, 740, and 758.

Testis and sperm.

It localises to the cytoplasm. The protein localises to the dynein axonemal particle. Its function is as follows. May play a role in the cytoplasmic assembly of the ciliary dynein arms. Binds GTP and has GTPase activity. Plays a role in fertilization. The sequence is that of Sperm-associated antigen 1 (Spag1) from Rattus norvegicus (Rat).